The following is a 350-amino-acid chain: MSVVEYLKKLSKLHGISGREDSVREFMKKELEKYCDSVEIDNFGNLIAKRGNKGKKIMIAAHMDEIGLMVKYIDDNGFLKFTKIGGIYDPTILNQKVVVHGSKGDLIGVLGSKPPHRMKEEEKTKIIKYEDMFIDIGAESREEAIEMGVNIGTWVSFLSEVYDLGKNRLTGKAFDDRVGCAVLLEVMKRLSEEDIDCQVYAVGTVQEEVGLKGARVSAFKINPDVAIALDVTIAGDHPGIKKEDAPVDLGKGPVVGIVDASGRGLIAHPKVLDMIKAVSEKYKIDVQWEVGEGGTTDATAIHLTREGIPTGVISVPARYIHTPVEVIDKRDLEKTVELVYNCIKEVNNFF.

A divalent metal cation is bound by residues His62 and Asp175. Residue Glu207 is the Proton acceptor of the active site. Positions 208, 230, and 321 each coordinate a divalent metal cation.

The protein belongs to the peptidase M42 family. Requires a divalent metal cation as cofactor.

The sequence is that of Putative aminopeptidase MJ0555 from Methanocaldococcus jannaschii (strain ATCC 43067 / DSM 2661 / JAL-1 / JCM 10045 / NBRC 100440) (Methanococcus jannaschii).